A 108-amino-acid polypeptide reads, in one-letter code: Tubulin-specific chaperone A (108 aa).

Ala-2 is subject to N-acetylalanine.

It belongs to the TBCA family. In terms of assembly, supercomplex made of cofactors A to E. Cofactors A and D function by capturing and stabilizing tubulin in a quasi-native conformation. Cofactor E binds to the cofactor D-tubulin complex; interaction with cofactor C then causes the release of tubulin polypeptides that are committed to the native state.

The protein resides in the cytoplasm. The protein localises to the cytoskeleton. In terms of biological role, tubulin-folding protein; involved in the early step of the tubulin folding pathway. This is Tubulin-specific chaperone A (TBCA) from Homo sapiens (Human).